The primary structure comprises 159 residues: 2-C-methyl-D-erythritol 2,4-cyclodiphosphate synthase (159 aa).

A divalent metal cation-binding residues include D10 and H12. 4-CDP-2-C-methyl-D-erythritol 2-phosphate-binding positions include 10–12 (DVH) and 36–37 (HS). H44 contacts a divalent metal cation. 4-CDP-2-C-methyl-D-erythritol 2-phosphate contacts are provided by residues 58 to 60 (DIG), 134 to 137 (TTTE), F141, and R144.

It belongs to the IspF family. Homotrimer. A divalent metal cation serves as cofactor.

The enzyme catalyses 4-CDP-2-C-methyl-D-erythritol 2-phosphate = 2-C-methyl-D-erythritol 2,4-cyclic diphosphate + CMP. It participates in isoprenoid biosynthesis; isopentenyl diphosphate biosynthesis via DXP pathway; isopentenyl diphosphate from 1-deoxy-D-xylulose 5-phosphate: step 4/6. In terms of biological role, involved in the biosynthesis of isopentenyl diphosphate (IPP) and dimethylallyl diphosphate (DMAPP), two major building blocks of isoprenoid compounds. Catalyzes the conversion of 4-diphosphocytidyl-2-C-methyl-D-erythritol 2-phosphate (CDP-ME2P) to 2-C-methyl-D-erythritol 2,4-cyclodiphosphate (ME-CPP) with a corresponding release of cytidine 5-monophosphate (CMP). In Bacteroides thetaiotaomicron (strain ATCC 29148 / DSM 2079 / JCM 5827 / CCUG 10774 / NCTC 10582 / VPI-5482 / E50), this protein is 2-C-methyl-D-erythritol 2,4-cyclodiphosphate synthase.